The following is a 446-amino-acid chain: Probable glycine dehydrogenase (decarboxylating) subunit 1 (446 aa).

It belongs to the GcvP family. N-terminal subunit subfamily. As to quaternary structure, the glycine cleavage system is composed of four proteins: P, T, L and H. In this organism, the P 'protein' is a heterodimer of two subunits.

The catalysed reaction is N(6)-[(R)-lipoyl]-L-lysyl-[glycine-cleavage complex H protein] + glycine + H(+) = N(6)-[(R)-S(8)-aminomethyldihydrolipoyl]-L-lysyl-[glycine-cleavage complex H protein] + CO2. Its function is as follows. The glycine cleavage system catalyzes the degradation of glycine. The P protein binds the alpha-amino group of glycine through its pyridoxal phosphate cofactor; CO(2) is released and the remaining methylamine moiety is then transferred to the lipoamide cofactor of the H protein. The chain is Probable glycine dehydrogenase (decarboxylating) subunit 1 from Desulforamulus reducens (strain ATCC BAA-1160 / DSM 100696 / MI-1) (Desulfotomaculum reducens).